Reading from the N-terminus, the 462-residue chain is dTDP-4-dehydro-2,6-dideoxy-D-glucose 3-dehydratase (462 aa).

Pyridoxal 5'-phosphate is bound by residues 112–113, Asp220, and Ser241; that span reads GS. His246 acts as the Proton donor/acceptor in catalysis. Asn314 serves as a coordination point for pyridoxal 5'-phosphate.

This sequence belongs to the DegT/DnrJ/EryC1 family. As to quaternary structure, homodimer. The cofactor is pyridoxal 5'-phosphate.

The enzyme catalyses dTDP-4-dehydro-2,6-dideoxy-alpha-D-glucose + 2 reduced [2Fe-2S]-[ferredoxin] + 2 H(+) = dTDP-4-dehydro-2,3,6-trideoxy-alpha-D-hexopyranose + 2 oxidized [2Fe-2S]-[ferredoxin] + H2O. Involved in the biosynthesis of forosamine ((4-dimethylamino)-2,3,4,6-tetradeoxy-alpha-D-threo-hexopyranose), a highly deoxygenated sugar component of several bioactive natural products such as the insecticidal spinosyns A and D. Catalyzes C-3 deoxygenation of dTDP-4-keto-2,6-dideoxy-alpha-D-glucose to yield dTDP-4-keto-2,3,6-trideoxy-D-glucose via a combined transamination-deoxygenation reaction. The catalysis is initiated by a transamination step in which pyridoxal 5'-phosphate (PLP) is converted to pyridoxamine 5'-phosphate (PMP) in the presence of L-glutamate. This coenzyme then forms a Schiff base with dTDP-4-keto-2,6-dideoxy-alpha-D-glucose and the resulting adduct undergoes a PMP-mediated beta-dehydration reaction to give a sugar enamine intermediate, which after a 2 electrons reduction and hydrolysis yields dTDP-4-keto-2,3,6-trideoxy-D-glucose as a product. Requires cellular reductase (ferredoxin or flavodoxin reductase) rather than a specific partner reductase. L-glutamate is 20-fold more efficient than L-aspartate as an amino donor. In the absence of an electron source and in the presence of L-glutamate, catalyzes a transamination reaction, converting dTDP-4-keto-2,6-dideoxy-alpha-D-glucose to dTDP-4-amino-2,4,6-trideoxy-D-glucose. The sequence is that of dTDP-4-dehydro-2,6-dideoxy-D-glucose 3-dehydratase from Saccharopolyspora spinosa.